The sequence spans 681 residues: Methionine--tRNA ligase (681 aa).

Residues 15 to 25 (PYANGPIHLGH) carry the 'HIGH' region motif. 4 residues coordinate Zn(2+): cysteine 146, cysteine 149, cysteine 159, and cysteine 162. The 'KMSKS' region motif lies at 332 to 336 (KMSKS). An ATP-binding site is contributed by lysine 335. Positions 547 to 569 (DNMAQAPKDNGKAKKDKKEAKSE) are disordered. Over residues 555-569 (DNGKAKKDKKEAKSE) the composition is skewed to basic and acidic residues. In terms of domain architecture, tRNA-binding spans 580 to 681 (DFAKIDLRIA…SGAQPGMQVK (102 aa)).

It belongs to the class-I aminoacyl-tRNA synthetase family. MetG type 1 subfamily. As to quaternary structure, homodimer. Zn(2+) serves as cofactor.

The protein localises to the cytoplasm. It catalyses the reaction tRNA(Met) + L-methionine + ATP = L-methionyl-tRNA(Met) + AMP + diphosphate. Functionally, is required not only for elongation of protein synthesis but also for the initiation of all mRNA translation through initiator tRNA(fMet) aminoacylation. This is Methionine--tRNA ligase from Hahella chejuensis (strain KCTC 2396).